Here is a 333-residue protein sequence, read N- to C-terminus: B3 domain-containing transcription factor NGA4 (333 aa).

The TF-B3 DNA-binding region spans 36 to 145; it reads FDKVLTPSDV…KIMFIDWRPR (110 aa). The interval 268–333 is disordered; it reads VEESSSSGDT…YKRKGKSLEL (66 aa). The segment covering 323–333 has biased composition (basic and acidic residues); sequence EYKRKGKSLEL.

The protein localises to the nucleus. Functionally, regulates lateral organ growth. Functionally redundant with NGA1, NGA2 and NGA3. The chain is B3 domain-containing transcription factor NGA4 (NGA4) from Arabidopsis thaliana (Mouse-ear cress).